Reading from the N-terminus, the 231-residue chain is Orotate phosphoribosyltransferase (231 aa).

5-phospho-alpha-D-ribose 1-diphosphate is bound by residues Lys-27, Tyr-79–Lys-80, Arg-106, Lys-107, Lys-110, His-112, and Asp-133–Ala-141. Residues Thr-137 and Arg-166 each contribute to the orotate site.

This sequence belongs to the purine/pyrimidine phosphoribosyltransferase family. PyrE subfamily. Homodimer. Mg(2+) is required as a cofactor.

The enzyme catalyses orotidine 5'-phosphate + diphosphate = orotate + 5-phospho-alpha-D-ribose 1-diphosphate. Its pathway is pyrimidine metabolism; UMP biosynthesis via de novo pathway; UMP from orotate: step 1/2. Its function is as follows. Catalyzes the transfer of a ribosyl phosphate group from 5-phosphoribose 1-diphosphate to orotate, leading to the formation of orotidine monophosphate (OMP). The protein is Orotate phosphoribosyltransferase of Bifidobacterium longum (strain NCC 2705).